The sequence spans 436 residues: Cytochrome b5-related protein (436 aa).

A Cytochrome b5 heme-binding domain is found at proline 16 to alanine 100. Positions 59 and 82 each coordinate heme.

Muscle.

Functionally, may play a role in muscle cell metabolism. This chain is Cytochrome b5-related protein (Cyt-b5-r), found in Drosophila melanogaster (Fruit fly).